The primary structure comprises 368 residues: Chaperone protein DnaJ (368 aa).

Residues 5-70 form the J domain; that stretch reads DYYQVLGVPR…KKRKLYDTHG (66 aa). A CR-type zinc finger spans residues 124 to 201; sequence GVERQIQIPT…CNGAGRVEDH (78 aa). Zn(2+) contacts are provided by Cys-137, Cys-140, Cys-153, Cys-156, Cys-175, Cys-178, Cys-189, and Cys-192. CXXCXGXG motif repeat units follow at residues 137–144, 153–160, 175–182, and 189–196; these read CTHCHGSG, CGTCRGSG, CPHCGGRG, and CKVCNGAG.

This sequence belongs to the DnaJ family. As to quaternary structure, homodimer. Zn(2+) serves as cofactor.

It localises to the cytoplasm. Its function is as follows. Participates actively in the response to hyperosmotic and heat shock by preventing the aggregation of stress-denatured proteins and by disaggregating proteins, also in an autonomous, DnaK-independent fashion. Unfolded proteins bind initially to DnaJ; upon interaction with the DnaJ-bound protein, DnaK hydrolyzes its bound ATP, resulting in the formation of a stable complex. GrpE releases ADP from DnaK; ATP binding to DnaK triggers the release of the substrate protein, thus completing the reaction cycle. Several rounds of ATP-dependent interactions between DnaJ, DnaK and GrpE are required for fully efficient folding. Also involved, together with DnaK and GrpE, in the DNA replication of plasmids through activation of initiation proteins. This is Chaperone protein DnaJ from Xylella fastidiosa (strain 9a5c).